The primary structure comprises 1285 residues: Dermonecrotic toxin (1285 aa).

A helical membrane pass occupies residues 402–422 (MLVPAVGIPINFALSATALGL).

It localises to the cytoplasm. Its subcellular location is the secreted. The protein resides in the host membrane. In terms of biological role, this is a dermonecrotic toxin. This osteolytic toxin, induces bone resorption. Potent mitogen. This toxin is associated with the severe progressive form of the atrophic rhinitis, a major respiratory disease in pigs. This is Dermonecrotic toxin (toxA) from Pasteurella multocida.